The following is a 313-amino-acid chain: Ribosomal protein L11 methyltransferase (313 aa).

S-adenosyl-L-methionine contacts are provided by Thr-161, Gly-182, Asp-204, and Asn-246.

Belongs to the methyltransferase superfamily. PrmA family.

The protein localises to the cytoplasm. The enzyme catalyses L-lysyl-[protein] + 3 S-adenosyl-L-methionine = N(6),N(6),N(6)-trimethyl-L-lysyl-[protein] + 3 S-adenosyl-L-homocysteine + 3 H(+). Its function is as follows. Methylates ribosomal protein L11. The protein is Ribosomal protein L11 methyltransferase of Acetivibrio thermocellus (strain ATCC 27405 / DSM 1237 / JCM 9322 / NBRC 103400 / NCIMB 10682 / NRRL B-4536 / VPI 7372) (Clostridium thermocellum).